The primary structure comprises 181 residues: Succinate dehydrogenase [ubiquinone] cytochrome b small subunit, mitochondrial (181 aa).

A mitochondrion-targeting transit peptide spans 1–31 (MMLPRSMKFMTGRRIFHTATVRAFQSTAKKS). Residues 32 to 66 (LTIPFLPVLPQKPGGVRGTPNDAYVPPPENKLEGS) lie on the Mitochondrial matrix side of the membrane. The helical transmembrane segment at 67 to 88 (YHWYMEKIFALSVVPLATTAML) threads the bilayer. At 89–98 (TTGPLSTAAD) the chain is on the mitochondrial intermembrane side. A helical membrane pass occupies residues 99-118 (SFFSVMLLGYCYMEFNSCIT). Cysteine 109 provides a ligand contact to heme. At 119 to 127 (DYISERVYG) the chain is on the mitochondrial matrix side. Tyrosine 120 serves as a coordination point for a ubiquinone. The helical transmembrane segment at 128–148 (VWHKYAMYMLGLGSAVSLFGI) threads the bilayer. The Mitochondrial intermembrane segment spans residues 149 to 181 (YKLETENDGVVGLVKSLWDSSEKDNSQKIEAKK).

It belongs to the CybS family. Forms part of complex II containing four subunits: a flavoprotein (FP), an iron-sulfur protein (IP) and a cytochrome b composed of a large and a small subunit.

Its subcellular location is the mitochondrion inner membrane. The protein operates within carbohydrate metabolism; tricarboxylic acid cycle. Its function is as follows. Membrane-anchoring subunit of succinate dehydrogenase (SDH) that is involved in system II of the mitochondrial electron transport chain and is responsible for transferring electrons from succinate to ubiquinone (coenzyme Q). SDH3 and SDH4 form the membrane dimer that anchors the catalytic dimer formed by SDH1 and SDH2 to the matrix surface of the mitochondrial inner membrane. Electrons originating from the catalytic dimer enter the membrane dimer for ubiquinone reduction. The protein is Succinate dehydrogenase [ubiquinone] cytochrome b small subunit, mitochondrial (SDH4) of Saccharomyces cerevisiae (strain ATCC 204508 / S288c) (Baker's yeast).